The chain runs to 308 residues: Pantothenate kinase (308 aa).

ATP is bound at residue 90–97 (GSVAVGKS).

Belongs to the prokaryotic pantothenate kinase family.

Its subcellular location is the cytoplasm. The enzyme catalyses (R)-pantothenate + ATP = (R)-4'-phosphopantothenate + ADP + H(+). The protein operates within cofactor biosynthesis; coenzyme A biosynthesis; CoA from (R)-pantothenate: step 1/5. The polypeptide is Pantothenate kinase (Sorangium cellulosum (strain So ce56) (Polyangium cellulosum (strain So ce56))).